A 95-amino-acid chain; its full sequence is Aspartyl/glutamyl-tRNA(Asn/Gln) amidotransferase subunit C (95 aa).

This sequence belongs to the GatC family. Heterotrimer of A, B and C subunits.

The catalysed reaction is L-glutamyl-tRNA(Gln) + L-glutamine + ATP + H2O = L-glutaminyl-tRNA(Gln) + L-glutamate + ADP + phosphate + H(+). It catalyses the reaction L-aspartyl-tRNA(Asn) + L-glutamine + ATP + H2O = L-asparaginyl-tRNA(Asn) + L-glutamate + ADP + phosphate + 2 H(+). Allows the formation of correctly charged Asn-tRNA(Asn) or Gln-tRNA(Gln) through the transamidation of misacylated Asp-tRNA(Asn) or Glu-tRNA(Gln) in organisms which lack either or both of asparaginyl-tRNA or glutaminyl-tRNA synthetases. The reaction takes place in the presence of glutamine and ATP through an activated phospho-Asp-tRNA(Asn) or phospho-Glu-tRNA(Gln). The chain is Aspartyl/glutamyl-tRNA(Asn/Gln) amidotransferase subunit C from Nitrosomonas europaea (strain ATCC 19718 / CIP 103999 / KCTC 2705 / NBRC 14298).